A 1291-amino-acid chain; its full sequence is DNA-directed RNA polymerase subunit beta' (1291 aa).

Residues cysteine 60, cysteine 62, cysteine 75, and cysteine 78 each contribute to the Zn(2+) site. Mg(2+)-binding residues include aspartate 535, aspartate 537, and aspartate 539. Zn(2+) contacts are provided by cysteine 878, cysteine 954, cysteine 961, and cysteine 964.

It belongs to the RNA polymerase beta' chain family. As to quaternary structure, the RNAP catalytic core consists of 2 alpha, 1 beta, 1 beta' and 1 omega subunit. When a sigma factor is associated with the core the holoenzyme is formed, which can initiate transcription. Mg(2+) is required as a cofactor. Zn(2+) serves as cofactor.

The enzyme catalyses RNA(n) + a ribonucleoside 5'-triphosphate = RNA(n+1) + diphosphate. DNA-dependent RNA polymerase catalyzes the transcription of DNA into RNA using the four ribonucleoside triphosphates as substrates. The protein is DNA-directed RNA polymerase subunit beta' of Thermobifida fusca (strain YX).